We begin with the raw amino-acid sequence, 297 residues long: Bifunctional protein FolD 2 (297 aa).

Residues 177 to 179, Ile202, and Ile243 contribute to the NADP(+) site; that span reads GKS.

This sequence belongs to the tetrahydrofolate dehydrogenase/cyclohydrolase family. Homodimer.

It catalyses the reaction (6R)-5,10-methylene-5,6,7,8-tetrahydrofolate + NADP(+) = (6R)-5,10-methenyltetrahydrofolate + NADPH. The enzyme catalyses (6R)-5,10-methenyltetrahydrofolate + H2O = (6R)-10-formyltetrahydrofolate + H(+). The protein operates within one-carbon metabolism; tetrahydrofolate interconversion. Catalyzes the oxidation of 5,10-methylenetetrahydrofolate to 5,10-methenyltetrahydrofolate and then the hydrolysis of 5,10-methenyltetrahydrofolate to 10-formyltetrahydrofolate. The sequence is that of Bifunctional protein FolD 2 from Rhizorhabdus wittichii (strain DSM 6014 / CCUG 31198 / JCM 15750 / NBRC 105917 / EY 4224 / RW1) (Sphingomonas wittichii).